The following is a 225-amino-acid chain: Phosphatidylserine decarboxylase proenzyme (225 aa).

Ser182 acts as the Schiff-base intermediate with substrate; via pyruvic acid in catalysis. A Pyruvic acid (Ser); by autocatalysis modification is found at Ser182.

It belongs to the phosphatidylserine decarboxylase family. PSD-A subfamily. In terms of assembly, heterodimer of a large membrane-associated beta subunit and a small pyruvoyl-containing alpha subunit. It depends on pyruvate as a cofactor. Is synthesized initially as an inactive proenzyme. Formation of the active enzyme involves a self-maturation process in which the active site pyruvoyl group is generated from an internal serine residue via an autocatalytic post-translational modification. Two non-identical subunits are generated from the proenzyme in this reaction, and the pyruvate is formed at the N-terminus of the alpha chain, which is derived from the carboxyl end of the proenzyme. The post-translation cleavage follows an unusual pathway, termed non-hydrolytic serinolysis, in which the side chain hydroxyl group of the serine supplies its oxygen atom to form the C-terminus of the beta chain, while the remainder of the serine residue undergoes an oxidative deamination to produce ammonia and the pyruvoyl prosthetic group on the alpha chain.

It localises to the cell membrane. It catalyses the reaction a 1,2-diacyl-sn-glycero-3-phospho-L-serine + H(+) = a 1,2-diacyl-sn-glycero-3-phosphoethanolamine + CO2. Its pathway is phospholipid metabolism; phosphatidylethanolamine biosynthesis; phosphatidylethanolamine from CDP-diacylglycerol: step 2/2. Catalyzes the formation of phosphatidylethanolamine (PtdEtn) from phosphatidylserine (PtdSer). The protein is Phosphatidylserine decarboxylase proenzyme of Neorickettsia sennetsu (strain ATCC VR-367 / Miyayama) (Ehrlichia sennetsu).